We begin with the raw amino-acid sequence, 686 residues long: Polyribonucleotide nucleotidyltransferase (686 aa).

The Mg(2+) site is built by Asp-478 and Asp-484. Positions 545-604 (PRVEVIQIPTDKIGLLIGPGGKTINALQDEYGVNISVENDGTVYVAGVEGMSVKAAVSAI) constitute a KH domain. Residues 614–684 (GDIYVGKVVK…KQNRISLEMV (71 aa)) enclose the S1 motif domain.

Belongs to the polyribonucleotide nucleotidyltransferase family. The cofactor is Mg(2+).

It localises to the cytoplasm. It carries out the reaction RNA(n+1) + phosphate = RNA(n) + a ribonucleoside 5'-diphosphate. Functionally, involved in mRNA degradation. Catalyzes the phosphorolysis of single-stranded polyribonucleotides processively in the 3'- to 5'-direction. The chain is Polyribonucleotide nucleotidyltransferase from Rubrobacter xylanophilus (strain DSM 9941 / JCM 11954 / NBRC 16129 / PRD-1).